Consider the following 284-residue polypeptide: D-tagatose-1,6-bisphosphate aldolase subunit GatY (284 aa).

Asp-82 acts as the Proton donor in catalysis. Zn(2+) contacts are provided by His-83 and His-180. Dihydroxyacetone phosphate is bound at residue Gly-181. His-208 contributes to the Zn(2+) binding site. Dihydroxyacetone phosphate-binding positions include 209 to 211 and 230 to 233; these read GAS and NVAT.

This sequence belongs to the class II fructose-bisphosphate aldolase family. TagBP aldolase GatY subfamily. In terms of assembly, forms a complex with GatZ. Requires Zn(2+) as cofactor.

The catalysed reaction is D-tagatofuranose 1,6-bisphosphate = D-glyceraldehyde 3-phosphate + dihydroxyacetone phosphate. Its pathway is carbohydrate metabolism; D-tagatose 6-phosphate degradation; D-glyceraldehyde 3-phosphate and glycerone phosphate from D-tagatose 6-phosphate: step 2/2. Catalytic subunit of the tagatose-1,6-bisphosphate aldolase GatYZ, which catalyzes the reversible aldol condensation of dihydroxyacetone phosphate (DHAP or glycerone-phosphate) with glyceraldehyde 3-phosphate (G3P) to produce tagatose 1,6-bisphosphate (TBP). Requires GatZ subunit for full activity and stability. Is involved in the catabolism of galactitol. This is D-tagatose-1,6-bisphosphate aldolase subunit GatY from Escherichia coli O157:H7.